The chain runs to 137 residues: Probable 4-amino-4-deoxy-L-arabinose-phosphoundecaprenol flippase subunit ArnF (137 aa).

3 helical membrane passes run 43-63 (AIAV…FWLL), 74-94 (YSLL…LPFF), and 98-118 (FTVS…TINL).

It belongs to the ArnF family. Heterodimer of ArnE and ArnF.

It localises to the cell inner membrane. Its pathway is bacterial outer membrane biogenesis; lipopolysaccharide biosynthesis. Functionally, translocates 4-amino-4-deoxy-L-arabinose-phosphoundecaprenol (alpha-L-Ara4N-phosphoundecaprenol) from the cytoplasmic to the periplasmic side of the inner membrane. This is Probable 4-amino-4-deoxy-L-arabinose-phosphoundecaprenol flippase subunit ArnF from Pseudomonas savastanoi pv. phaseolicola (strain 1448A / Race 6) (Pseudomonas syringae pv. phaseolicola (strain 1448A / Race 6)).